Reading from the N-terminus, the 464-residue chain is Cytoplasmic tRNA 2-thiolation protein 2 (464 aa).

Belongs to the CTU2/NCS2 family.

It is found in the cytoplasm. It functions in the pathway tRNA modification; 5-methoxycarbonylmethyl-2-thiouridine-tRNA biosynthesis. Its function is as follows. Plays a central role in 2-thiolation of mcm(5)S(2)U at tRNA wobble positions of tRNA(Lys), tRNA(Glu) and tRNA(Gln). May act by forming a heterodimer with NCS6/CTU1 that ligates sulfur from thiocarboxylated URM1 onto the uridine of tRNAs at wobble position. This is Cytoplasmic tRNA 2-thiolation protein 2 from Oryza sativa subsp. indica (Rice).